The primary structure comprises 201 residues: 3-isopropylmalate dehydratase small subunit (201 aa).

This sequence belongs to the LeuD family. LeuD type 1 subfamily. Heterodimer of LeuC and LeuD.

The enzyme catalyses (2R,3S)-3-isopropylmalate = (2S)-2-isopropylmalate. It participates in amino-acid biosynthesis; L-leucine biosynthesis; L-leucine from 3-methyl-2-oxobutanoate: step 2/4. Functionally, catalyzes the isomerization between 2-isopropylmalate and 3-isopropylmalate, via the formation of 2-isopropylmaleate. The sequence is that of 3-isopropylmalate dehydratase small subunit from Shewanella denitrificans (strain OS217 / ATCC BAA-1090 / DSM 15013).